Here is a 758-residue protein sequence, read N- to C-terminus: MEIDGNTLVFIIVILFLFFSSPGGDGVSSQYEFNQLQRLKQQFRTEHNTFVNMTYTDSFRNITGLKLSYQDMLNNPLQNATYPLPGKDYDRWFPNQNYMVLPNDVIEAINTEVWNTSNDDASNLFPPNITSTLLGKIDLVSNNKYEKIRMPVPRFYEPATDFSEDIPPEGETYWSEWPSYGELHNVSFQHGEIAIQISHMSNLQDNNNYLRRNFINKKNDRWKLLNLQIDFSDKAEKEKHSIYSKAVYDIQRGRILSISQSSKFHSLFALPHYMSFQNDYNEKIFNDVKELVDEFWNFTDYTDVMTMKDVQDAYNNANFKCEYLIFLQLEPWNQYTRDQIKLIDDELNWPLGRPANLSSLPPINVVSGLLYSPDCGVRLGLHNVKGTRYELKIMSIRKHLLFGIALFAAQIYLLLTQMHHTNTPSMVNKISFYCFSMINLVDGSLATLYFVAASVVPELYLPLVISAFSCFILASIFEIRYLISIYASQVNEQNVGIINLLRGNTGTYDENRPRPAFIPDEGSIGGSLYGRFFFMLIIFTFLILSSTSWPRQLRMVFEYILIFILNSYWIPQIFRNAVKGIPSRRERARSSIGGNRSQNKMPLLWSFVIGTTIIRSLPVVYVFTYSSNVFRHHKDVHFVVFLSLWLLFQISILYSQDVLGSRWFLPKHTIPDGYSYFKPLSNEYISEHGGGTAEHTVDCAICMSDVPIYIEEIPETHKVDQHSYMVTPCNHVFHTSCLENWMNYKLQCPVCRSPLPPL.

The first 26 residues, 1 to 26 (MEIDGNTLVFIIVILFLFFSSPGGDG), serve as a signal peptide directing secretion. Residues 27–398 (VSSQYEFNQL…YELKIMSIRK (372 aa)) are Lumenal-facing. The helical transmembrane segment at 399 to 419 (HLLFGIALFAAQIYLLLTQMH) threads the bilayer. Over 420-431 (HTNTPSMVNKIS) the chain is Cytoplasmic. The chain crosses the membrane as a helical span at residues 432–452 (FYCFSMINLVDGSLATLYFVA). Residues 453 to 458 (ASVVPE) are Lumenal-facing. A helical membrane pass occupies residues 459 to 479 (LYLPLVISAFSCFILASIFEI). Topologically, residues 480-523 (RYLISIYASQVNEQNVGIINLLRGNTGTYDENRPRPAFIPDEGS) are cytoplasmic. A helical membrane pass occupies residues 524–544 (IGGSLYGRFFFMLIIFTFLIL). Residues 545-553 (SSTSWPRQL) lie on the Lumenal side of the membrane. The chain crosses the membrane as a helical span at residues 554–574 (RMVFEYILIFILNSYWIPQIF). At 575-602 (RNAVKGIPSRRERARSSIGGNRSQNKMP) the chain is on the cytoplasmic side. A helical membrane pass occupies residues 603 to 623 (LLWSFVIGTTIIRSLPVVYVF). Residues 624 to 635 (TYSSNVFRHHKD) lie on the Lumenal side of the membrane. Residues 636 to 656 (VHFVVFLSLWLLFQISILYSQ) traverse the membrane as a helical segment. At 657-758 (DVLGSRWFLP…PVCRSPLPPL (102 aa)) the chain is on the cytoplasmic side. The RING-type; atypical zinc finger occupies 699–752 (CAICMSDVPIYIEEIPETHKVDQHSYMVTPCNHVFHTSCLENWMNYKLQCPVCR).

As to quaternary structure, component of the DSC E3 ligase complexes composed of at least TUL1, DSC2, DSC3, UBX3, CDC48 as well as VLD1 for the vacuole-localized complex or GLD1 for the Golgi/endosome-localized complex. Interacts with UBC4.

Its subcellular location is the golgi apparatus membrane. The catalysed reaction is S-ubiquitinyl-[E2 ubiquitin-conjugating enzyme]-L-cysteine + [acceptor protein]-L-lysine = [E2 ubiquitin-conjugating enzyme]-L-cysteine + N(6)-ubiquitinyl-[acceptor protein]-L-lysine.. The protein operates within protein modification; protein ubiquitination. Its function is as follows. Catalytic component of the DSC E3 ubiquitin ligase complexes that tag proteins present in Golgi, endosome and vacuole membranes and function in protein homeostasis under non-stress conditions and support a role in protein quality control. Mediates ubiquitination of vacuolar proteins such as CPS1, PPN1, PEP12 and other proteins containing exposed hydrophilic residues within their transmembrane domains, leading to their sorting into internal vesicles in late endosomes. Targets also the unpalmitoylated endosomal SNARE TLG1 to the MVB pathway. This chain is Transmembrane E3 ubiquitin-protein ligase 1 (TUL1), found in Saccharomyces cerevisiae (strain ATCC 204508 / S288c) (Baker's yeast).